Reading from the N-terminus, the 208-residue chain is Imidazoleglycerol-phosphate dehydratase (208 aa).

The protein belongs to the imidazoleglycerol-phosphate dehydratase family.

Its subcellular location is the cytoplasm. It catalyses the reaction D-erythro-1-(imidazol-4-yl)glycerol 3-phosphate = 3-(imidazol-4-yl)-2-oxopropyl phosphate + H2O. Its pathway is amino-acid biosynthesis; L-histidine biosynthesis; L-histidine from 5-phospho-alpha-D-ribose 1-diphosphate: step 6/9. The protein is Imidazoleglycerol-phosphate dehydratase of Prochlorococcus marinus (strain MIT 9211).